A 483-amino-acid chain; its full sequence is NAD-dependent protein deacetylase SRT1 (483 aa).

One can recognise a Deacetylase sirtuin-type domain in the interval 27–270; the sequence is PELLHKKIEE…MYMMNLRIPP (244 aa). NAD(+) is bound by residues 53–57, 63–65, and 114–117; these read AGIST, DFR, and QNVD. Histidine 134 (proton acceptor) is an active-site residue. Residues cysteine 142, cysteine 145, cysteine 167, and cysteine 172 each contribute to the Zn(2+) site. NAD(+) contacts are provided by residues 209 to 211 and 235 to 237; these read GTS and NLQ.

This sequence belongs to the sirtuin family. Class IV subfamily. Requires Zn(2+) as cofactor.

Its subcellular location is the nucleus. The catalysed reaction is N(6)-acetyl-L-lysyl-[protein] + NAD(+) + H2O = 2''-O-acetyl-ADP-D-ribose + nicotinamide + L-lysyl-[protein]. In terms of biological role, NAD-dependent protein deacetylase. Has deacetylase activity towards H3K9Ac. May have a function in the safeguard against genome instability and DNA damage to ensure plant cell growth. May negatively regulate metabolic signal transduction involving methanol and jasmonates during leaf senescence. Required for histone H3K9Ac deacetylation and repression of AP2-1/RSR1 and amylase genes during early seed development. Functions as an epigenetic regulator to repress the expression of glycolytic genes and glycolysis in seedlings. Reduces lysine acetylation of the glycolytic glyceraldehyde-3-phosphate dehydrogenase (GAPDH), which is found to also function as an activator of glycolytic gene expression. This Oryza sativa subsp. indica (Rice) protein is NAD-dependent protein deacetylase SRT1.